A 220-amino-acid polypeptide reads, in one-letter code: 6-phosphogluconolactonase (220 aa).

Belongs to the glucosamine/galactosamine-6-phosphate isomerase family. 6-phosphogluconolactonase subfamily.

The catalysed reaction is 6-phospho-D-glucono-1,5-lactone + H2O = 6-phospho-D-gluconate + H(+). Its pathway is carbohydrate degradation; pentose phosphate pathway; D-ribulose 5-phosphate from D-glucose 6-phosphate (oxidative stage): step 2/3. Its function is as follows. Hydrolysis of 6-phosphogluconolactone to 6-phosphogluconate. This Thermotoga maritima (strain ATCC 43589 / DSM 3109 / JCM 10099 / NBRC 100826 / MSB8) protein is 6-phosphogluconolactonase (pgl).